A 219-amino-acid polypeptide reads, in one-letter code: MLQAGAPTAGSFRTGEVHTGTTIMAVEFDGGVVVGSDSRVSAGAAVVNRVFDKLSPLHQRIYCALSGSAADAQAIADMAAYQLELHGLELEEPPLVLAAANIVKNISYKYREDLLAHLMVAGWDQHEGGQVYGTMGGMLIRQPFAIGGSGSTYIYGYVDAAYKPGMTPEECRRFTTDAITLAMNRDGSSGGVIYLVTITADGVDHRVILGDELPKFYDE.

The propeptide at 1 to 20 (MLQAGAPTAGSFRTGEVHTG) is removed in mature form. T21 functions as the Nucleophile in the catalytic mechanism. N6-acetyllysine is present on residues K53 and K109.

Belongs to the peptidase T1B family. As to quaternary structure, the 26S proteasome consists of a 20S proteasome core and two 19S regulatory subunits. The 20S proteasome core is composed of 28 subunits that are arranged in four stacked rings, resulting in a barrel-shaped structure. The two end rings are each formed by seven alpha subunits, and the two central rings are each formed by seven beta subunits. The catalytic chamber with the active sites is on the inside of the barrel. Component of the immunoproteasome, where it displaces the equivalent housekeeping subunit PSMB6. Component of the spermatoproteasome, a form of the proteasome specifically found in testis. Interacts with NCOA2 and NCOA3. Post-translationally, autocleaved. The resulting N-terminal Thr residue of the mature subunit is responsible for the nucleophile proteolytic activity. Detected in the cytoplasmic lobe of elongated spermatids, in residual bodies, and in the acrosomal cap of round spermatids.

It localises to the cytoplasm. It is found in the nucleus. The enzyme catalyses Cleavage of peptide bonds with very broad specificity.. The proteasome is a multicatalytic proteinase complex which is characterized by its ability to cleave peptides with Arg, Phe, Tyr, Leu, and Glu adjacent to the leaving group at neutral or slightly basic pH. The proteasome has an ATP-dependent proteolytic activity. This subunit is involved in antigen processing to generate class I binding peptides. The chain is Proteasome subunit beta type-9 (Psmb9) from Rattus norvegicus (Rat).